Reading from the N-terminus, the 181-residue chain is Translation initiation factor IF-3 (181 aa).

It belongs to the IF-3 family. In terms of assembly, monomer.

The protein localises to the cytoplasm. IF-3 binds to the 30S ribosomal subunit and shifts the equilibrium between 70S ribosomes and their 50S and 30S subunits in favor of the free subunits, thus enhancing the availability of 30S subunits on which protein synthesis initiation begins. The protein is Translation initiation factor IF-3 of Pseudoalteromonas translucida (strain TAC 125).